The following is a 194-amino-acid chain: Cysteine and glycine-rich protein 3 (194 aa).

Residues 1–5 (MPNWG) form an interaction with TCAP region. One can recognise an LIM zinc-binding 1 domain in the interval 10–61 (CGACEKTVYHAEEIQCNGRSFHKTCFHCMACRKALDSTTVAAHESEIYCKVC). The Nuclear localization signal motif lies at 64–69 (RRYGPK). The interval 94-105 (QSPKPARAATTS) is interaction with CLF2. A phosphoserine mark is found at S95, S111, and S153. The region spanning 120-171 (CPRCGKSVYAAEKVMGGGKPWHKTCFRCAICGKSLESTNVTDKDGELYCKVC) is the LIM zinc-binding 2 domain.

In terms of assembly, self-associates. Oligomeric in the cytoplasm and monomeric in the nucleus. Homooligomers preferentially form along the actin cytoskeleton. Interacts with TCAP. Interacts with LDHD, MYOD1, MYOG, ACTN2, NRAP, MYF6. Interacts (via N-terminus)D with GLRX3 (via C-terminus) and PPP3CA; GLRX3 and calcineurin compete for interaction with CSRP3. Interacts with CFL2; the stoichiometry influences F-actin depolymerization and possibly two molecules of CFL2 can interact with one molecule of CSRP3 resulting in the highest functional impact; the interaction is stronger with phosphorylated CFL2. In terms of processing, phosphorylated by PKC/PRKCA.

It localises to the nucleus. It is found in the cytoplasm. The protein resides in the cytoskeleton. The protein localises to the myofibril. Its subcellular location is the sarcomere. It localises to the z line. Positive regulator of myogenesis. Acts as a cofactor for myogenic bHLH transcription factors such as MYOD1, and probably MYOG and MYF6. Enhances the DNA-binding activity of the MYOD1:TCF3 isoform E47 complex and may promote formation of a functional MYOD1:TCF3 isoform E47:MEF2A complex involved in myogenesis. Plays a crucial and specific role in the organization of cytosolic structures in cardiomyocytes. Could play a role in mechanical stretch sensing. May be a scaffold protein that promotes the assembly of interacting proteins at Z-line structures. It is essential for calcineurin anchorage to the Z line. Required for stress-induced calcineurin-NFAT activation. The role in regulation of cytoskeleton dynamics by association with CFL2 is reported conflictingly. Proposed to contribute to the maintenance of muscle cell integrity through an actin-based mechanism. Can directly bind to actin filaments, cross-link actin filaments into bundles without polarity selectivity and protect them from dilution- and cofilin-mediated depolymerization; the function seems to involve its self-association. In vitro can inhibit PKC/PRKCA activity. Proposed to be involved in cardiac stress signaling by down-regulating excessive PKC/PRKCA signaling. This Mus musculus (Mouse) protein is Cysteine and glycine-rich protein 3 (Csrp3).